The chain runs to 103 residues: Large ribosomal subunit protein bL21 (103 aa).

This sequence belongs to the bacterial ribosomal protein bL21 family. As to quaternary structure, part of the 50S ribosomal subunit. Contacts protein L20.

Functionally, this protein binds to 23S rRNA in the presence of protein L20. The sequence is that of Large ribosomal subunit protein bL21 from Serratia proteamaculans (strain 568).